Reading from the N-terminus, the 158-residue chain is Endolysin (158 aa).

Residue E19 is part of the active site.

This sequence belongs to the glycosyl hydrolase 24 family. In terms of assembly, monomer.

The protein localises to the host cytoplasm. It catalyses the reaction Endolytic cleavage of the (1-&gt;4)-beta-glycosidic linkage between N-acetylmuramic acid (MurNAc) and N-acetylglucosamine (GlcNAc) residues in peptidoglycan with concomitant formation of a 1,6-anhydrobond in the MurNAc residue.. Its activity is regulated as follows. Inactivated by zinc. Functionally, endolysin with transglycosylase activity that degrades host peptidoglycans and participates with the holin and spanin proteins in the sequential events which lead to the programmed host cell lysis releasing the mature viral particles. Once the holin has permeabilized the host cell membrane, the endolysin can reach the periplasm and break down the peptidoglycan layer. The chain is Endolysin (R) from Escherichia coli (Bacteriophage lambda).